We begin with the raw amino-acid sequence, 361 residues long: Phosphoserine aminotransferase (361 aa).

2 residues coordinate L-glutamate: serine 9 and arginine 42. Residues 76 to 77 (GR), tryptophan 102, threonine 153, aspartate 173, and glutamine 196 each bind pyridoxal 5'-phosphate. N6-(pyridoxal phosphate)lysine is present on lysine 197. 238 to 239 (NT) contacts pyridoxal 5'-phosphate.

The protein belongs to the class-V pyridoxal-phosphate-dependent aminotransferase family. SerC subfamily. In terms of assembly, homodimer. Requires pyridoxal 5'-phosphate as cofactor.

The protein resides in the cytoplasm. It carries out the reaction O-phospho-L-serine + 2-oxoglutarate = 3-phosphooxypyruvate + L-glutamate. The enzyme catalyses 4-(phosphooxy)-L-threonine + 2-oxoglutarate = (R)-3-hydroxy-2-oxo-4-phosphooxybutanoate + L-glutamate. It participates in amino-acid biosynthesis; L-serine biosynthesis; L-serine from 3-phospho-D-glycerate: step 2/3. It functions in the pathway cofactor biosynthesis; pyridoxine 5'-phosphate biosynthesis; pyridoxine 5'-phosphate from D-erythrose 4-phosphate: step 3/5. In terms of biological role, catalyzes the reversible conversion of 3-phosphohydroxypyruvate to phosphoserine and of 3-hydroxy-2-oxo-4-phosphonooxybutanoate to phosphohydroxythreonine. The sequence is that of Phosphoserine aminotransferase from Cronobacter sakazakii (strain ATCC BAA-894) (Enterobacter sakazakii).